Reading from the N-terminus, the 164-residue chain is Transcriptional repressor NrdR (164 aa).

The segment at 3–34 is a zinc-finger region; sequence CPKCNYHKSSVVDSRQAEDGNTIRRRRECEQC. The ATP-cone domain maps to 49–139; sequence LLVIKKDGTR…VYKSFKDVDE (91 aa).

It belongs to the NrdR family. Zn(2+) serves as cofactor.

Negatively regulates transcription of bacterial ribonucleotide reductase nrd genes and operons by binding to NrdR-boxes. This chain is Transcriptional repressor NrdR, found in Streptococcus pyogenes serotype M6 (strain ATCC BAA-946 / MGAS10394).